Here is a 230-residue protein sequence, read N- to C-terminus: Sugar fermentation stimulation protein homolog (230 aa).

Belongs to the SfsA family.

The chain is Sugar fermentation stimulation protein homolog from Clostridium botulinum (strain ATCC 19397 / Type A).